Here is a 438-residue protein sequence, read N- to C-terminus: Xylose isomerase (438 aa).

Active-site residues include His103 and Asp106. Glu234, Glu270, His273, Asp298, Asp309, Asp311, and Asp341 together coordinate Mg(2+).

Belongs to the xylose isomerase family. Homotetramer. Requires Mg(2+) as cofactor.

The protein localises to the cytoplasm. The catalysed reaction is alpha-D-xylose = alpha-D-xylulofuranose. In Phocaeicola vulgatus (strain ATCC 8482 / DSM 1447 / JCM 5826 / CCUG 4940 / NBRC 14291 / NCTC 11154) (Bacteroides vulgatus), this protein is Xylose isomerase.